Consider the following 233-residue polypeptide: MAAPTGKLLVHRIRAGLTCLTQVRWSRYSPQYLDPETDKQVYSRPLEELSEQERTERELKIVRPIKAAPSNVTSSVFSDPTISKFTNMMMKGGNKNLSRSIMNQTLEQIKRTQLEKYYKAPEEERASIECNPYTIFHQALHNCQPIIGLTSILRGGKSYQVPTPLKENRRRFLAMKWLITECRDNKHRRTLMYEKLSQALLDAYQMQGEVVKKKHELHKMAEANRAFAHFRWW.

The transit peptide at 1–28 (MAAPTGKLLVHRIRAGLTCLTQVRWSRY) directs the protein to the mitochondrion.

This sequence belongs to the universal ribosomal protein uS7 family. As to quaternary structure, component of the mitochondrial ribosome small subunit (28S) which comprises a 12S rRNA and about 30 distinct proteins.

It is found in the mitochondrion. This chain is Small ribosomal subunit protein uS7m (mrps7), found in Xenopus laevis (African clawed frog).